Consider the following 250-residue polypeptide: Peptidyl-tRNA hydrolase (250 aa).

Residue tyrosine 14 coordinates tRNA. The active-site Proton acceptor is histidine 19. Residues phenylalanine 64, asparagine 66, and asparagine 112 each contribute to the tRNA site. Positions 192-250 (MGDGNQRPGGVKTDPAQLEKAPPKAQSHIRQARQNQKKPNIPESGPMAEMLKKLLGKKD) are disordered. Polar residues predominate over residues 219-229 (HIRQARQNQKK). Basic and acidic residues predominate over residues 241–250 (MLKKLLGKKD).

The protein belongs to the PTH family. In terms of assembly, monomer.

Its subcellular location is the cytoplasm. The enzyme catalyses an N-acyl-L-alpha-aminoacyl-tRNA + H2O = an N-acyl-L-amino acid + a tRNA + H(+). In terms of biological role, hydrolyzes ribosome-free peptidyl-tRNAs (with 1 or more amino acids incorporated), which drop off the ribosome during protein synthesis, or as a result of ribosome stalling. Functionally, catalyzes the release of premature peptidyl moieties from peptidyl-tRNA molecules trapped in stalled 50S ribosomal subunits, and thus maintains levels of free tRNAs and 50S ribosomes. The sequence is that of Peptidyl-tRNA hydrolase from Brucella suis (strain ATCC 23445 / NCTC 10510).